Reading from the N-terminus, the 99-residue chain is Small ribosomal subunit protein bS18 (99 aa).

Positions 1 to 25 (MAESKGRPGSASQRPTGGDKAIAGQ) are disordered.

Belongs to the bacterial ribosomal protein bS18 family. Part of the 30S ribosomal subunit. Forms a tight heterodimer with protein bS6.

Binds as a heterodimer with protein bS6 to the central domain of the 16S rRNA, where it helps stabilize the platform of the 30S subunit. This is Small ribosomal subunit protein bS18 from Solibacter usitatus (strain Ellin6076).